We begin with the raw amino-acid sequence, 288 residues long: Mortality factor 4-like protein 2 (288 aa).

Positions 1-15 are enriched in polar residues; sequence MSSRKQASQTRGQQS. The segment at 1 to 115 is disordered; it reads MSSRKQASQT…DPTVESEEAF (115 aa). The residue at position 71 (Ser-71) is a Phosphoserine. The region spanning 117–288 is the MRG domain; the sequence is SRMEVKVKIP…ASADYHRKAL (172 aa).

Component of the NuA4 histone acetyltransferase complex which contains the catalytic subunit KAT5/TIP60 and the subunits EP400, TRRAP/PAF400, BRD8/SMAP, EPC1, DMAP1/DNMAP1, RUVBL1/TIP49, RUVBL2, ING3, actin, ACTL6A/BAF53A, MORF4L1/MRG15, MORF4L2/MRGX, MRGBP, YEATS4/GAS41 and VPS72/YL1. The NuA4 complex interacts with MYC and the adenovirus E1A protein. MORF4L1 may also participate in the formation of NuA4 related complexes which lack the KAT5/TIP60 catalytic subunit, but which include the SWI/SNF related protein SRCAP. Component of the MSIN3A histone deacetylase complex, which includes SIN3A, HDAC2, ARID4B, MORF4L1, RBBP4/RbAp48, and RBBP7/RbAp46. Interacts with MRFAP1 and RB1. May also interact with one or more as yet undefined members of the TLE (transducin-like enhancer of split) family of transcriptional repressors.

Its subcellular location is the nucleus. Its function is as follows. Component of the NuA4 histone acetyltransferase complex which is involved in transcriptional activation of select genes principally by acetylation of nucleosomal histone H4 and H2A. This modification may both alter nucleosome - DNA interactions and promote interaction of the modified histones with other proteins which positively regulate transcription. This complex may be required for the activation of transcriptional programs associated with oncogene and proto-oncogene mediated growth induction, tumor suppressor mediated growth arrest and replicative senescence, apoptosis, and DNA repair. The NuA4 complex ATPase and helicase activities seem to be, at least in part, contributed by the association of RUVBL1 and RUVBL2 with EP400. NuA4 may also play a direct role in DNA repair when directly recruited to sites of DNA damage. Also a component of the MSIN3A complex which acts to repress transcription by deacetylation of nucleosomal histones. In Mus musculus (Mouse), this protein is Mortality factor 4-like protein 2 (Morf4l2).